A 401-amino-acid chain; its full sequence is Chalcone synthase 5 (401 aa).

The active site involves Cys-168.

The protein belongs to the thiolase-like superfamily. Chalcone/stilbene synthases family.

It carries out the reaction (E)-4-coumaroyl-CoA + 3 malonyl-CoA + 3 H(+) = 2',4,4',6'-tetrahydroxychalcone + 3 CO2 + 4 CoA. It functions in the pathway secondary metabolite biosynthesis; flavonoid biosynthesis. In terms of biological role, the primary product of this enzyme is 4,2',4',6'-tetrahydroxychalcone (also termed naringenin-chalcone or chalcone) which can under specific conditions spontaneously isomerize into naringenin. The polypeptide is Chalcone synthase 5 (CHS5) (Sorghum bicolor (Sorghum)).